The primary structure comprises 316 residues: Taste receptor type 2 member 109 (316 aa).

Topologically, residues 1 to 14 (MEHLLKRTFDITEN) are extracellular. The chain crosses the membrane as a helical span at residues 15-35 (ILLIILFIELIIGLIGNGFTA). The Cytoplasmic portion of the chain corresponds to 36–62 (LVHCMDWVKRKKMSLVNKILTALATSR). The chain crosses the membrane as a helical span at residues 63–83 (IFLLWFMLVGFPISSLYPYLV). Over 84-94 (TTRLMIQFTST) the chain is Extracellular. The helical transmembrane segment at 95–115 (LWTIANHISVWFATCLSVFYF) threads the bilayer. Topologically, residues 116-135 (LKIANFSNSPFLYLKRRVEK) are cytoplasmic. Residues 136–156 (VVSVTLLVSLVLLFLNILLLN) traverse the membrane as a helical segment. The Extracellular segment spans residues 157–191 (LEINMCINEYHQINISYIFISYYHLSCQIQVLGSH). Asn170 carries an N-linked (GlcNAc...) asparagine glycan. The helical transmembrane segment at 192–212 (IIFLSVPVVLSLSTFLLLIFS) threads the bilayer. At 213–241 (LWTLHKRMQQHVQGGRDARTTAHFKALQA) the chain is on the cytoplasmic side. A helical transmembrane segment spans residues 242-262 (VIAFLLLYSIFILSLLLQFWI). At 263-270 (HGLRKKPP) the chain is on the extracellular side. A helical membrane pass occupies residues 271–291 (FIAFCQVVDTAFPSFHSYVLI). Over 292–316 (LRDRKLRHASLSVLSWLKCRPNYVK) the chain is Cytoplasmic.

The protein belongs to the G-protein coupled receptor T2R family.

The protein localises to the membrane. Putative taste receptor which may play a role in the perception of bitterness. The sequence is that of Taste receptor type 2 member 109 from Mus musculus (Mouse).